The primary structure comprises 308 residues: HTH-type transcriptional activator AllS (308 aa).

Positions Phe2 to Thr59 constitute an HTH lysR-type domain. A DNA-binding region (H-T-H motif) is located at residues Phe19–Lys38.

This sequence belongs to the LysR transcriptional regulatory family.

Functionally, positive regulator essential for the expression of AllD operon. Binds to the AllD promoter. In Escherichia coli O157:H7, this protein is HTH-type transcriptional activator AllS (allS).